Reading from the N-terminus, the 303-residue chain is Protease HtpX homolog (303 aa).

2 helical membrane-spanning segments follow: residues 19–39 (IIIF…VSYF) and 41–61 (LGEF…YYAY). His-146 lines the Zn(2+) pocket. Glu-147 is an active-site residue. His-150 serves as a coordination point for Zn(2+). 2 helical membrane passes run 156 to 176 (VRLQ…GDSL) and 192 to 212 (NILG…ATLL). Residue Glu-221 coordinates Zn(2+).

The protein belongs to the peptidase M48B family. Zn(2+) serves as cofactor.

The protein localises to the cell inner membrane. The chain is Protease HtpX homolog from Dictyoglomus thermophilum (strain ATCC 35947 / DSM 3960 / H-6-12).